The chain runs to 300 residues: Ribosomal RNA small subunit methyltransferase H (300 aa).

S-adenosyl-L-methionine is bound by residues 33-35 (AGH), aspartate 52, phenylalanine 86, aspartate 97, and glutamine 104.

This sequence belongs to the methyltransferase superfamily. RsmH family.

It is found in the cytoplasm. The catalysed reaction is cytidine(1402) in 16S rRNA + S-adenosyl-L-methionine = N(4)-methylcytidine(1402) in 16S rRNA + S-adenosyl-L-homocysteine + H(+). Its function is as follows. Specifically methylates the N4 position of cytidine in position 1402 (C1402) of 16S rRNA. This is Ribosomal RNA small subunit methyltransferase H from Aliarcobacter butzleri (strain RM4018) (Arcobacter butzleri).